Reading from the N-terminus, the 54-residue chain is UPF0391 membrane protein Pmen_0080 (54 aa).

The next 2 helical transmembrane spans lie at 4-24 (WALT…GGIA) and 28-48 (AGIA…SFIM).

This sequence belongs to the UPF0391 family.

It localises to the cell membrane. The chain is UPF0391 membrane protein Pmen_0080 from Ectopseudomonas mendocina (strain ymp) (Pseudomonas mendocina).